Here is a 360-residue protein sequence, read N- to C-terminus: Peptide chain release factor 1 (360 aa).

Position 233 is an N5-methylglutamine (Q233). The interval 286–305 (NEIAQERKSQVGTGDRSERI) is disordered.

This sequence belongs to the prokaryotic/mitochondrial release factor family. Methylated by PrmC. Methylation increases the termination efficiency of RF1.

It is found in the cytoplasm. In terms of biological role, peptide chain release factor 1 directs the termination of translation in response to the peptide chain termination codons UAG and UAA. The sequence is that of Peptide chain release factor 1 from Acetivibrio thermocellus (strain ATCC 27405 / DSM 1237 / JCM 9322 / NBRC 103400 / NCIMB 10682 / NRRL B-4536 / VPI 7372) (Clostridium thermocellum).